Here is a 132-residue protein sequence, read N- to C-terminus: Small ribosomal subunit protein bS6 (132 aa).

The interval 99 to 132 (ASPMVKAKDERRGDRREDFANETADDADAGDSEE) is disordered. The span at 104-117 (KAKDERRGDRREDF) shows a compositional bias: basic and acidic residues. A compositionally biased stretch (acidic residues) spans 121–132 (TADDADAGDSEE).

This sequence belongs to the bacterial ribosomal protein bS6 family.

Its function is as follows. Binds together with bS18 to 16S ribosomal RNA. In Serratia proteamaculans (strain 568), this protein is Small ribosomal subunit protein bS6.